The following is a 527-amino-acid chain: Glucose-6-phosphate isomerase (527 aa).

Residue E323 is the Proton donor of the active site. Active-site residues include H352 and K454.

The protein belongs to the GPI family.

It is found in the cytoplasm. The catalysed reaction is alpha-D-glucose 6-phosphate = beta-D-fructose 6-phosphate. It participates in carbohydrate biosynthesis; gluconeogenesis. The protein operates within carbohydrate degradation; glycolysis; D-glyceraldehyde 3-phosphate and glycerone phosphate from D-glucose: step 2/4. In terms of biological role, catalyzes the reversible isomerization of glucose-6-phosphate to fructose-6-phosphate. This chain is Glucose-6-phosphate isomerase, found in Prochlorococcus marinus (strain MIT 9301).